A 546-amino-acid polypeptide reads, in one-letter code: MSLSALHKYRLQYKPVLPKHIADIDNITIEEGAKTQSAVNQKELSELFKHTYGLPICNIVAGKNADIHRVIRCGFILSGGPAAGGHNVVAGLFDGLMKGNKENKLYGFRCGAGGILSNDYIEITAELVDKHRNTGGFDLVGSGRTKIETEEQFATAFKHITALKLNAMVVVGGDDSNTNAALLAEYFAAHGSDCVFVGVPKTIDGDLKNQYIETSFGFDTACKTYSELIGNIQRDAISSRKYWHFIKVMGRSASHIALEAALETQPTYCIISEEVEDKKMTVSQIASEIADIVIERHKKGLNFGVVLIPEGLVEFIPEVKALIKELNNLLAHKKEEYSKITEFSAQKAFVCENISESCAATFKNLPDNIAKQLLLDRDPHGNVNVSAIETESFVSGIVKAEIVKRGIKVPFTPVHHFFGYEGRCAFPSNFDSTYCYALGYTAFILLALKKTGQICCISGLQKPAEEWICGGVPLTIMMNMEQRNGEMKPVIKKALVEIEGKPFKFYQSKRAQWASAEDFVFPGAIQYFGPSEVCDQPTKTLLLEQN.

A diphosphate-binding site is contributed by Gly-80. Residue Asp-174 coordinates Mg(2+). Substrate is bound by residues 202–204 (TID), 241–242 (KY), 249–251 (MGR), Glu-310, and 420–423 (YEGR). Asp-204 acts as the Proton acceptor in catalysis.

It belongs to the phosphofructokinase type A (PFKA) family. PPi-dependent PFK group II subfamily. Clade 'Long' sub-subfamily. In terms of assembly, homodimer. It depends on Mg(2+) as a cofactor. The cofactor is Mn(2+).

It is found in the cytoplasm. It carries out the reaction beta-D-fructose 6-phosphate + diphosphate = beta-D-fructose 1,6-bisphosphate + phosphate + H(+). Its pathway is carbohydrate degradation; glycolysis; D-glyceraldehyde 3-phosphate and glycerone phosphate from D-glucose: step 3/4. Its activity is regulated as follows. Non-allosteric. Competitively inhibited by PPi, Pi and fructose 1,6-bisphosphate. Catalyzes the phosphorylation of D-fructose 6-phosphate, the first committing step of glycolysis. Uses inorganic phosphate (PPi) as phosphoryl donor instead of ATP like common ATP-dependent phosphofructokinases (ATP-PFKs), which renders the reaction reversible, and can thus function both in glycolysis and gluconeogenesis. Consistently, PPi-PFK can replace the enzymes of both the forward (ATP-PFK) and reverse (fructose-bisphosphatase (FBPase)) reactions. The chain is Pyrophosphate--fructose 6-phosphate 1-phosphotransferase from Entamoeba histolytica (strain ATCC 30459 / HM-1:IMSS / ABRM).